A 92-amino-acid polypeptide reads, in one-letter code: Small ribosomal subunit protein uS19c (92 aa).

The protein belongs to the universal ribosomal protein uS19 family.

The protein resides in the plastid. It localises to the chloroplast. Its function is as follows. Protein S19 forms a complex with S13 that binds strongly to the 16S ribosomal RNA. The polypeptide is Small ribosomal subunit protein uS19c (Acorus calamus (Sweet flag)).